The sequence spans 196 residues: DnaA initiator-associating protein DiaA (196 aa).

The region spanning 34–196 (LVHSLLNGNK…DNTLFPHQDD (163 aa)) is the SIS domain.

This sequence belongs to the SIS family. DiaA subfamily. In terms of assembly, homotetramer; dimer of dimers.

In terms of biological role, required for the timely initiation of chromosomal replication via direct interactions with the DnaA initiator protein. The sequence is that of DnaA initiator-associating protein DiaA from Citrobacter koseri (strain ATCC BAA-895 / CDC 4225-83 / SGSC4696).